The sequence spans 87 residues: Phospholemman (87 aa).

The N-terminal stretch at 1 to 20 (MASLSHILVLWVGILTVVNA) is a signal peptide. Over 21–35 (EAPQEHDPFTYDYQS) the chain is Extracellular. The chain crosses the membrane as a helical span at residues 36-56 (LRIGGLIIAGILFILGILIVL). At 57–87 (SRRCRCKFNQQQSLGKMRSPHLAAQFSSESC) the chain is on the cytoplasmic side. The S-palmitoyl cysteine moiety is linked to residue cysteine 60. At cysteine 62 the chain carries S-glutathionyl cysteine; alternate. A lipid anchor (S-palmitoyl cysteine; alternate) is attached at cysteine 62. The residue at position 75 (serine 75) is a Phosphoserine; by PKA and PKC. A Phosphoserine; by PKA modification is found at serine 83.

This sequence belongs to the FXYD family. Homotetramer. Monomer. Regulatory subunit of the sodium/potassium-transporting ATPase (NKA) which is composed of a catalytic alpha subunit, a non-catalytic beta subunit and an additional regulatory subunit. The monomeric form associates with NKA while the oligomeric form does not. Interacts with the catalytic alpha-1 subunit ATP1A1. Also interacts with the catalytic alpha-2 and alpha-3 subunits ATP1A2 and ATP1A3. Very little interaction with ATP1A1, ATP1A2 or ATP1A3 when phosphorylated at Ser-83. Interacts with the non-catalytic beta-1 subunit ATP1B1. Oxidative stress decreases interaction with ATP1A1 but increases interaction with ATP1B1. In terms of processing, major plasma membrane substrate for cAMP-dependent protein kinase (PKA) and protein kinase C (PKC) in several different tissues. Phosphorylated in response to insulin and adrenergic stimulation. Phosphorylation at Ser-83 stimulates sodium/potassium-transporting ATPase activity while the unphosphorylated form inhibits sodium/potassium-transporting ATPase activity. Phosphorylation increases tetramerization, decreases binding to ATP1A1 and reduces inhibition of ATP1A1 activity. Phosphorylation at Ser-75 leads to greatly reduced interaction with ATP1A1, ATP1A2 and ATP1A3. May be phosphorylated by DMPK. Post-translationally, palmitoylation increases half-life and stability and is enhanced upon phosphorylation at Ser-83 by PKA.

The protein resides in the cell membrane. The protein localises to the sarcolemma. It localises to the apical cell membrane. Its subcellular location is the membrane. It is found in the caveola. The protein resides in the T-tubule. In terms of biological role, associates with and regulates the activity of the sodium/potassium-transporting ATPase (NKA) which transports Na(+) out of the cell and K(+) into the cell. Inhibits NKA activity in its unphosphorylated state and stimulates activity when phosphorylated. Reduces glutathionylation of the NKA beta-1 subunit ATP1B1, thus reversing glutathionylation-mediated inhibition of ATP1B1. Contributes to female sexual development by maintaining the excitability of neurons which secrete gonadotropin-releasing hormone. In Sus scrofa (Pig), this protein is Phospholemman.